A 319-amino-acid chain; its full sequence is Ankyrin repeat domain-containing protein 1 (319 aa).

Residues 63-89 (EKEREAELKKKKLEQRSKLENLEDLEI) are a coiled coil. ANK repeat units lie at residues 152–181 (YKRTALHRACLEGHLAIVEKLIEAGAQIEF), 185–214 (LESTAIHWASRGGNLDVLKLLLNKGAKISA), 218–247 (LLSTALHVAVRTGHYECAEHLIACEADLNA), 251–280 (EGDTPLHDAVRLNRYKMIRLLITYGADLNV), and 284–315 (AGKTPMDLVLNWQNGTKAIFDSLKENSYKASR).

In terms of assembly, interacts with TTN/titin and YBX1. In terms of tissue distribution, expressed in heart. In postnatal neonatal heart, it is expressed in an asymmetrical way; left ventricle favored towards right ventricle. Whether or not this could be correlated with a hypertrophic heart is still a matter of debate. Levels increase gradually from newborn to adult.

Its subcellular location is the nucleus. In terms of biological role, may play an important role in endothelial cell activation. May act as a nuclear transcription factor that negatively regulates the expression of cardiac genes. The polypeptide is Ankyrin repeat domain-containing protein 1 (ANKRD1) (Sus scrofa (Pig)).